Consider the following 447-residue polypeptide: Phosphoglucosamine mutase (447 aa).

The Phosphoserine intermediate role is filled by Ser106. Ser106, Asp245, Asp247, and Asp249 together coordinate Mg(2+). Ser106 bears the Phosphoserine mark.

The protein belongs to the phosphohexose mutase family. It depends on Mg(2+) as a cofactor. Activated by phosphorylation.

The catalysed reaction is alpha-D-glucosamine 1-phosphate = D-glucosamine 6-phosphate. Its function is as follows. Catalyzes the conversion of glucosamine-6-phosphate to glucosamine-1-phosphate. The sequence is that of Phosphoglucosamine mutase from Cupriavidus taiwanensis (strain DSM 17343 / BCRC 17206 / CCUG 44338 / CIP 107171 / LMG 19424 / R1) (Ralstonia taiwanensis (strain LMG 19424)).